A 239-amino-acid polypeptide reads, in one-letter code: 1-(5-phosphoribosyl)-5-[(5-phosphoribosylamino)methylideneamino] imidazole-4-carboxamide isomerase (239 aa).

The Proton acceptor role is filled by Asp9. Asp131 acts as the Proton donor in catalysis.

The protein belongs to the HisA/HisF family.

It is found in the cytoplasm. The catalysed reaction is 1-(5-phospho-beta-D-ribosyl)-5-[(5-phospho-beta-D-ribosylamino)methylideneamino]imidazole-4-carboxamide = 5-[(5-phospho-1-deoxy-D-ribulos-1-ylimino)methylamino]-1-(5-phospho-beta-D-ribosyl)imidazole-4-carboxamide. It participates in amino-acid biosynthesis; L-histidine biosynthesis; L-histidine from 5-phospho-alpha-D-ribose 1-diphosphate: step 4/9. The sequence is that of 1-(5-phosphoribosyl)-5-[(5-phosphoribosylamino)methylideneamino] imidazole-4-carboxamide isomerase from Bacteroides fragilis (strain ATCC 25285 / DSM 2151 / CCUG 4856 / JCM 11019 / LMG 10263 / NCTC 9343 / Onslow / VPI 2553 / EN-2).